Reading from the N-terminus, the 58-residue chain is Large ribosomal subunit protein uL30 (58 aa).

The protein belongs to the universal ribosomal protein uL30 family. In terms of assembly, part of the 50S ribosomal subunit.

The sequence is that of Large ribosomal subunit protein uL30 from Pelobacter propionicus (strain DSM 2379 / NBRC 103807 / OttBd1).